We begin with the raw amino-acid sequence, 255 residues long: 5-oxoprolinase subunit A (255 aa).

Belongs to the LamB/PxpA family. Forms a complex composed of PxpA, PxpB and PxpC.

It carries out the reaction 5-oxo-L-proline + ATP + 2 H2O = L-glutamate + ADP + phosphate + H(+). In terms of biological role, catalyzes the cleavage of 5-oxoproline to form L-glutamate coupled to the hydrolysis of ATP to ADP and inorganic phosphate. The protein is 5-oxoprolinase subunit A of Campylobacter jejuni subsp. jejuni serotype O:6 (strain 81116 / NCTC 11828).